Consider the following 363-residue polypeptide: Protein-glutamate methylesterase/protein-glutamine glutaminase 3 (363 aa).

The Response regulatory domain maps to 8 to 125 (KVLCVDDSAL…RDGMLDYAEK (118 aa)). The residue at position 59 (Asp-59) is a 4-aspartylphosphate. Residues 164–356 (LVSTEKLIII…RRVMARLATM (193 aa)) enclose the CheB-type methylesterase domain. Catalysis depends on residues Ser-176, His-202, and Asp-298.

Belongs to the CheB family. Phosphorylated by CheA. Phosphorylation of the N-terminal regulatory domain activates the methylesterase activity.

The protein resides in the cytoplasm. The catalysed reaction is [protein]-L-glutamate 5-O-methyl ester + H2O = L-glutamyl-[protein] + methanol + H(+). It catalyses the reaction L-glutaminyl-[protein] + H2O = L-glutamyl-[protein] + NH4(+). Involved in chemotaxis. Part of a chemotaxis signal transduction system that modulates chemotaxis in response to various stimuli. Catalyzes the demethylation of specific methylglutamate residues introduced into the chemoreceptors (methyl-accepting chemotaxis proteins or MCP) by CheR. Also mediates the irreversible deamidation of specific glutamine residues to glutamic acid. This is Protein-glutamate methylesterase/protein-glutamine glutaminase 3 from Burkholderia lata (strain ATCC 17760 / DSM 23089 / LMG 22485 / NCIMB 9086 / R18194 / 383).